Here is an 82-residue protein sequence, read N- to C-terminus: uncharacterized protein (82 aa).

2 helical membrane passes run 32 to 52 and 59 to 79; these read PFSIALDLVSGTMVGLLIGIL and SKPLFLIIFTIIGMIAGFNII.

The protein localises to the cell membrane. This is an uncharacterized protein from Rickettsia prowazekii (strain Madrid E).